The following is a 434-amino-acid chain: GTPase Obg (434 aa).

The 159-residue stretch at 1–159 (MQFIDRCQIK…KTVRLELKYL (159 aa)) folds into the Obg domain. The region spanning 160 to 329 (ANVGIVGYPN…LVDRVFDLYQ (170 aa)) is the OBG-type G domain. Residues 166–173 (GYPNAGKS), 191–195 (FTTLV), 212–215 (DIPG), 282–285 (NKMD), and 310–312 (ISA) each bind GTP. The Mg(2+) site is built by serine 173 and threonine 193. The region spanning 356–434 (EKTIDDDPLD…ICDYEYLIDE (79 aa)) is the OCT domain.

It belongs to the TRAFAC class OBG-HflX-like GTPase superfamily. OBG GTPase family. In terms of assembly, monomer. Mg(2+) serves as cofactor.

The protein localises to the cytoplasm. Functionally, an essential GTPase which binds GTP, GDP and possibly (p)ppGpp with moderate affinity, with high nucleotide exchange rates and a fairly low GTP hydrolysis rate. Plays a role in control of the cell cycle, stress response, ribosome biogenesis and in those bacteria that undergo differentiation, in morphogenesis control. The protein is GTPase Obg of Mycoplasmoides gallisepticum (strain R(low / passage 15 / clone 2)) (Mycoplasma gallisepticum).